Consider the following 179-residue polypeptide: MARLVFRKNGKVIENPEEIKSFLSQYGVVYDVWGVDRLPEDVRKNYDIDEENSKAIIQAYEKELKELKEKMGYITEDIVVLSEKTPNLDGLMAKFKREHHHIDDEVRFVVDGSGIFPVKIEDDIVDIHVEAGELIVVPAGARHWFELDENRKIKCIRVFKTPAGWEAIYNENETATMRD.

Residues His99, His101, Glu105, and His143 each contribute to the Fe(2+) site. Ni(2+) contacts are provided by His99, His101, Glu105, and His143.

It belongs to the acireductone dioxygenase (ARD) family. Monomer. Fe(2+) serves as cofactor. Requires Ni(2+) as cofactor.

The enzyme catalyses 1,2-dihydroxy-5-(methylsulfanyl)pent-1-en-3-one + O2 = 3-(methylsulfanyl)propanoate + CO + formate + 2 H(+). It carries out the reaction 1,2-dihydroxy-5-(methylsulfanyl)pent-1-en-3-one + O2 = 4-methylsulfanyl-2-oxobutanoate + formate + 2 H(+). It participates in amino-acid biosynthesis; L-methionine biosynthesis via salvage pathway; L-methionine from S-methyl-5-thio-alpha-D-ribose 1-phosphate: step 5/6. Catalyzes 2 different reactions between oxygen and the acireductone 1,2-dihydroxy-3-keto-5-methylthiopentene (DHK-MTPene) depending upon the metal bound in the active site. Fe-containing acireductone dioxygenase (Fe-ARD) produces formate and 2-keto-4-methylthiobutyrate (KMTB), the alpha-ketoacid precursor of methionine in the methionine recycle pathway. Ni-containing acireductone dioxygenase (Ni-ARD) produces methylthiopropionate, carbon monoxide and formate, and does not lie on the methionine recycle pathway. In Sulfurihydrogenibium sp. (strain YO3AOP1), this protein is Acireductone dioxygenase.